The following is a 55-amino-acid chain: Large ribosomal subunit protein bL33 (55 aa).

It belongs to the bacterial ribosomal protein bL33 family.

In Leifsonia xyli subsp. xyli (strain CTCB07), this protein is Large ribosomal subunit protein bL33.